Here is a 396-residue protein sequence, read N- to C-terminus: Histidine-rich glycoprotein (396 aa).

Cystatin domains lie at 1–102 (AVNP…SALT) and 103–169 (NMRA…RFSA). 6 disulfide bridges follow: cysteine 7–cysteine 375, cysteine 56–cysteine 67, cysteine 77–cysteine 92, cysteine 123–cysteine 297, cysteine 137–cysteine 160, and cysteine 212–cysteine 242. The N-linked (GlcNAc...) asparagine; partial glycan is linked to asparagine 70. Residues asparagine 91 and asparagine 122 are each glycosylated (N-linked (GlcNAc...) asparagine). A disordered region spans residues 176 to 322 (RPFHSGEHEH…GPGKGHFRFH (147 aa)). A compositionally biased stretch (basic and acidic residues) spans 197–208 (GSKDHGHPHESY). Asparagine 220 carries an N-linked (GlcNAc...) asparagine glycan. Pro residues predominate over residues 233 to 246 (LPFPPPGLRCPHPP). The segment covering 255 to 265 (PPHDHSSDEHH) has biased composition (basic and acidic residues). The segment covering 266–284 (PHGHHPHGHHPHGHHPHGH) has biased composition (basic residues). Basic and acidic residues predominate over residues 285-296 (HPPDNDFYDHGP). A compositionally biased stretch (basic residues) spans 304-322 (PPPRHSKERGPGKGHFRFH). Serine 309 carries the phosphoserine modification.

In terms of assembly, interacts (via the HRR domain) with TPM1; the interaction appears to contribute to the antiangiogenic properties of the HRR domain. Interacts with THBS1 (via the TSP type I repeats); the interaction blocks the antiangiogenic effect of THBS1 with CD36. Interacts with PLG (via its Kringle domains); the interaction tethers PLG to the cell surface and enhances its activation. Interacts with THBS2; the interaction blocks the antiangiogenic effect of THBS2 with CD36. Interacts with HPSE; the interaction is enhanced at acidic pH, partially inhibits binding of HPSE to cell surface receptors and modulates its enzymatic activity. Interacts (via the HRR domain) with TMP1; the interaction partially mediates the antiangiogenic properties of HRG. Interacts with kappa and lambda light chains of IgG molecules. Interacts with ATP5F1A; the interaction occurs on the surface of T-cells and alters their cell morphology in concert with CONA. Binds IgG molecules containing kappa and lambda light chains and inhibits the formation of insoluble immunoglobulin complexes. Interacts with F12; the interaction, which is enhanced in the presence of zinc ions and inhibited by heparin-binding to HRG, inhibits factor XII autoactivation and contact-initiated coagulation. Post-translationally, N-glycosylated. In terms of processing, proteolytic cleavage produces several HRG fragments which are mostly disulfide-linked and, therefore, not released. On platelet activation, may release a 33 kDa antiangiogenic peptide which encompasses the HRR.

Its subcellular location is the secreted. Functionally, plasma glycoprotein that binds a number of ligands such as heme, heparin, heparan sulfate, thrombospondin, plasminogen, and divalent metal ions. Inhibits rosette formation. Acts as an adapter protein and implicated in regulating many processes such as immune complex and pathogen clearance, cell adhesion, angiogenesis, coagulation and fibrinolysis. Mediates clearance of necrotic cells through enhancing the phagocytosis of necrotic cells in a heparan sulfate-dependent pathway. This process can be regulated by the presence of certain HRG ligands such as heparin and zinc ions. Binds to IgG subclasses of immunoglobins containing kappa and lambda light chains with different affinities regulating their clearance and inhibiting the formation of insoluble immune complexes. Tethers plasminogen to the cell surface. Binds T-cells and alters the cell morphology. Modulates angiogenesis by blocking the CD6-mediated antiangiongenic effect of thrombospondins, THBS1 and THBS2. The chain is Histidine-rich glycoprotein (HRG) from Bos taurus (Bovine).